A 497-amino-acid chain; its full sequence is Guanosine-5'-triphosphate,3'-diphosphate pyrophosphatase (497 aa).

The protein belongs to the GppA/Ppx family. GppA subfamily.

The enzyme catalyses guanosine 3'-diphosphate 5'-triphosphate + H2O = guanosine 3',5'-bis(diphosphate) + phosphate + H(+). The protein operates within purine metabolism; ppGpp biosynthesis; ppGpp from GTP: step 2/2. Functionally, catalyzes the conversion of pppGpp to ppGpp. Guanosine pentaphosphate (pppGpp) is a cytoplasmic signaling molecule which together with ppGpp controls the 'stringent response', an adaptive process that allows bacteria to respond to amino acid starvation, resulting in the coordinated regulation of numerous cellular activities. In Aliivibrio fischeri (strain MJ11) (Vibrio fischeri), this protein is Guanosine-5'-triphosphate,3'-diphosphate pyrophosphatase.